A 631-amino-acid chain; its full sequence is 1-deoxy-D-xylulose-5-phosphate synthase (631 aa).

Thiamine diphosphate is bound by residues histidine 73 and 114 to 116 (GHS). Mg(2+) is bound at residue aspartate 145. Residues 146–147 (GA), asparagine 174, tyrosine 285, and glutamate 366 contribute to the thiamine diphosphate site. Asparagine 174 serves as a coordination point for Mg(2+).

The protein belongs to the transketolase family. DXPS subfamily. In terms of assembly, homodimer. The cofactor is Mg(2+). Thiamine diphosphate serves as cofactor.

The catalysed reaction is D-glyceraldehyde 3-phosphate + pyruvate + H(+) = 1-deoxy-D-xylulose 5-phosphate + CO2. It participates in metabolic intermediate biosynthesis; 1-deoxy-D-xylulose 5-phosphate biosynthesis; 1-deoxy-D-xylulose 5-phosphate from D-glyceraldehyde 3-phosphate and pyruvate: step 1/1. Its function is as follows. Catalyzes the acyloin condensation reaction between C atoms 2 and 3 of pyruvate and glyceraldehyde 3-phosphate to yield 1-deoxy-D-xylulose-5-phosphate (DXP). This is 1-deoxy-D-xylulose-5-phosphate synthase from Desulfitobacterium hafniense (strain Y51).